The primary structure comprises 202 residues: uncharacterized protein (202 aa).

This is an uncharacterized protein from Saccharomyces cerevisiae (strain ATCC 204508 / S288c) (Baker's yeast).